An 817-amino-acid chain; its full sequence is E3 ubiquitin-protein ligase TRIM9 (817 aa).

The segment at 10 to 50 (CPVCGSFYREPIILPCSHNLCQACARNILVQTPESESPQSR) adopts an RING-type zinc-finger fold. A Phosphothreonine modification is found at threonine 41. Residues serine 44, serine 46, serine 49, and serine 53 each carry the phosphoserine modification. B box-type zinc fingers lie at residues 163-212 (AAAL…LVPP) and 224-266 (RKVS…VKAL). Zn(2+) is bound by residues cysteine 168, cysteine 171, cysteine 193, histidine 198, cysteine 229, histidine 232, cysteine 252, and histidine 258. The stretch at 273-340 (HKSQLSQALN…KAQLLARVNK (68 aa)) forms a coiled coil. Positions 374 to 432 (IKENDPSGFLQISDALIRRVHLTEDQWGKGTLTPRMTTDFDLSLDNSPLLQSIHQLDFV) constitute a COS domain. The region spanning 440–535 (VPATPILQLE…KTLVLQTSEA (96 aa)) is the Fibronectin type-III domain. Residues 535 to 557 (AAGAHETKPMKDTDSEEQTLPFP) form a disordered region. Over residues 537-547 (GAHETKPMKDT) the composition is skewed to basic and acidic residues. In terms of domain architecture, B30.2/SPRY spans 613–794 (ETQSASYSQL…VQVSLWAPGL (182 aa)).

The protein belongs to the TRIM/RBCC family. In terms of assembly, interacts with SNAP25. Auto-ubiquitinated. As to expression, brain. Expression is higher in the cerebral cortex and hippocampus (at protein level). Its expression is mainly confined to the central nervous system. The developing neocortex, the dorsal thalamus, the midbrain, the basal area of the hindbrain and spinal cord show high level of expression during embryogenesis. In adult brain, it is detected in the Purkinje cells of the cerebellum, in the hippocampus, and in the cortex.

It localises to the cytoplasm. It is found in the cell projection. Its subcellular location is the dendrite. The protein resides in the cytoplasmic vesicle. The protein localises to the secretory vesicle. It localises to the synaptic vesicle. It is found in the synapse. Its subcellular location is the cytoskeleton. It catalyses the reaction S-ubiquitinyl-[E2 ubiquitin-conjugating enzyme]-L-cysteine + [acceptor protein]-L-lysine = [E2 ubiquitin-conjugating enzyme]-L-cysteine + N(6)-ubiquitinyl-[acceptor protein]-L-lysine.. Its pathway is protein modification; protein ubiquitination. Its function is as follows. E3 ubiquitin-protein ligase which ubiquitinates itself in cooperation with an E2 enzyme UBE2D2/UBC4 and serves as a targeting signal for proteasomal degradation. May play a role in regulation of neuronal functions. May act as a regulator of synaptic vesicle exocytosis by controlling the availability of SNAP25 for the SNARE complex formation. This is E3 ubiquitin-protein ligase TRIM9 (Trim9) from Mus musculus (Mouse).